A 229-amino-acid chain; its full sequence is Enolase-phosphatase E1 (229 aa).

A disordered region spans residues 207 to 229; sequence RDPASHHPQVQRFDDIHPEQIPA. Over residues 218-229 the composition is skewed to basic and acidic residues; it reads RFDDIHPEQIPA.

This sequence belongs to the HAD-like hydrolase superfamily. MasA/MtnC family. Monomer. It depends on Mg(2+) as a cofactor.

It carries out the reaction 5-methylsulfanyl-2,3-dioxopentyl phosphate + H2O = 1,2-dihydroxy-5-(methylsulfanyl)pent-1-en-3-one + phosphate. Its pathway is amino-acid biosynthesis; L-methionine biosynthesis via salvage pathway; L-methionine from S-methyl-5-thio-alpha-D-ribose 1-phosphate: step 3/6. The protein operates within amino-acid biosynthesis; L-methionine biosynthesis via salvage pathway; L-methionine from S-methyl-5-thio-alpha-D-ribose 1-phosphate: step 4/6. Its function is as follows. Bifunctional enzyme that catalyzes the enolization of 2,3-diketo-5-methylthiopentyl-1-phosphate (DK-MTP-1-P) into the intermediate 2-hydroxy-3-keto-5-methylthiopentenyl-1-phosphate (HK-MTPenyl-1-P), which is then dephosphorylated to form the acireductone 1,2-dihydroxy-3-keto-5-methylthiopentene (DHK-MTPene). The polypeptide is Enolase-phosphatase E1 (Klebsiella pneumoniae (strain 342)).